We begin with the raw amino-acid sequence, 231 residues long: Dephospho-CoA kinase domain-containing protein (231 aa).

One can recognise a DPCK domain in the interval 3 to 207 (LVGLTGGIAS…RSLEYLPLRF (205 aa)). Residue 8-15 (GGIASGKS) coordinates ATP.

This sequence belongs to the CoaE family.

This chain is Dephospho-CoA kinase domain-containing protein (DCAKD), found in Homo sapiens (Human).